The following is an 87-amino-acid chain: Cytochrome c6 (87 aa).

Residues cysteine 10, cysteine 13, histidine 14, and methionine 56 each coordinate heme c.

This sequence belongs to the cytochrome c family. PetJ subfamily. Monomer. Post-translationally, binds 1 heme c group covalently per subunit.

Its subcellular location is the plastid. The protein resides in the chloroplast thylakoid lumen. Functionally, functions as an electron carrier between membrane-bound cytochrome b6-f and photosystem I in oxygenic photosynthesis. The polypeptide is Cytochrome c6 (petJ) (Euglena viridis (Cercaria viridis)).